The chain runs to 85 residues: MVLNPSKYQDTRTWKMTPAMIRARKPFFKGNMLGLTLLLGVTGSVYYYTYHFLHKDNDFADVPIPPIDPQELEALKKEYEAKKKA.

The Mitochondrial matrix segment spans residues 1 to 26 (MVLNPSKYQDTRTWKMTPAMIRARKP). The chain crosses the membrane as a helical span at residues 27–49 (FFKGNMLGLTLLLGVTGSVYYYT). At 50 to 85 (YHFLHKDNDFADVPIPPIDPQELEALKKEYEAKKKA) the chain is on the mitochondrial intermembrane side.

This sequence belongs to the COA3 family. In terms of assembly, component of 250-400 kDa complexes called cytochrome oxidase assembly intermediates or COA complexes composed at least COA3, COX14, COX5A, SHY1 and SSC1. Interacts with COX1 and MSS51.

The protein localises to the mitochondrion inner membrane. Required for assembly of cytochrome c oxidase (complex IV). With COX14, negatively regulates COX1 translation and is involved in MSS51 association with newly synthesized COX1. The chain is Cytochrome c oxidase assembly factor 3, mitochondrial (COA3) from Saccharomyces cerevisiae (strain RM11-1a) (Baker's yeast).